Consider the following 390-residue polypeptide: 8-amino-7-oxononanoate synthase (390 aa).

R19 serves as a coordination point for substrate. 106 to 107 (GY) provides a ligand contact to pyridoxal 5'-phosphate. Substrate is bound at residue H131. The pyridoxal 5'-phosphate site is built by S176, H204, and T233. K236 bears the N6-(pyridoxal phosphate)lysine mark. T350 lines the substrate pocket.

This sequence belongs to the class-II pyridoxal-phosphate-dependent aminotransferase family. BioF subfamily. As to quaternary structure, homodimer. It depends on pyridoxal 5'-phosphate as a cofactor.

It catalyses the reaction 6-carboxyhexanoyl-[ACP] + L-alanine + H(+) = (8S)-8-amino-7-oxononanoate + holo-[ACP] + CO2. It functions in the pathway cofactor biosynthesis; biotin biosynthesis. Functionally, catalyzes the decarboxylative condensation of pimeloyl-[acyl-carrier protein] and L-alanine to produce 8-amino-7-oxononanoate (AON), [acyl-carrier protein], and carbon dioxide. This Pseudomonas putida (strain ATCC 700007 / DSM 6899 / JCM 31910 / BCRC 17059 / LMG 24140 / F1) protein is 8-amino-7-oxononanoate synthase.